We begin with the raw amino-acid sequence, 81 residues long: ATP synthase subunit c (81 aa).

Helical transmembrane passes span 14–34 (YLGAGLAAIGCIGGGVGIGTV) and 60–80 (LAFAEVTSLYALFVAIMLLFV).

This sequence belongs to the ATPase C chain family. In terms of assembly, F-type ATPases have 2 components, F(1) - the catalytic core - and F(0) - the membrane proton channel. F(1) has five subunits: alpha(3), beta(3), gamma(1), delta(1), epsilon(1). F(0) has three main subunits: a(1), b(2) and c(10-14). The alpha and beta chains form an alternating ring which encloses part of the gamma chain. F(1) is attached to F(0) by a central stalk formed by the gamma and epsilon chains, while a peripheral stalk is formed by the delta and b chains.

The protein resides in the cell membrane. Its function is as follows. F(1)F(0) ATP synthase produces ATP from ADP in the presence of a proton or sodium gradient. F-type ATPases consist of two structural domains, F(1) containing the extramembraneous catalytic core and F(0) containing the membrane proton channel, linked together by a central stalk and a peripheral stalk. During catalysis, ATP synthesis in the catalytic domain of F(1) is coupled via a rotary mechanism of the central stalk subunits to proton translocation. Functionally, key component of the F(0) channel; it plays a direct role in translocation across the membrane. A homomeric c-ring of between 10-14 subunits forms the central stalk rotor element with the F(1) delta and epsilon subunits. This is ATP synthase subunit c from Clostridium acetobutylicum (strain ATCC 824 / DSM 792 / JCM 1419 / IAM 19013 / LMG 5710 / NBRC 13948 / NRRL B-527 / VKM B-1787 / 2291 / W).